The primary structure comprises 284 residues: Diaminopimelate epimerase (284 aa).

Substrate-binding residues include Asn20, Gln53, and Asn73. The active-site Proton donor is Cys82. Substrate contacts are provided by residues 83 to 84, Asn167, Asn200, and 218 to 219; these read GN and ER. The active-site Proton acceptor is the Cys227. 228-229 serves as a coordination point for substrate; that stretch reads GS.

Belongs to the diaminopimelate epimerase family. As to quaternary structure, homodimer.

The protein resides in the cytoplasm. The catalysed reaction is (2S,6S)-2,6-diaminopimelate = meso-2,6-diaminopimelate. It participates in amino-acid biosynthesis; L-lysine biosynthesis via DAP pathway; DL-2,6-diaminopimelate from LL-2,6-diaminopimelate: step 1/1. Its function is as follows. Catalyzes the stereoinversion of LL-2,6-diaminopimelate (L,L-DAP) to meso-diaminopimelate (meso-DAP), a precursor of L-lysine and an essential component of the bacterial peptidoglycan. This chain is Diaminopimelate epimerase, found in Xanthomonas axonopodis pv. citri (strain 306).